A 339-amino-acid chain; its full sequence is MVREEVAGSTQTLQWKCVESRVDSKRLYYGRFILSPLRKGQADTVGIALRRALLGEIEGTCITRAKFGXVPHEYSTIAGIEESVQEILLNLKEIVLRSNLYGVRDASICVKGPRYITAQDIILPPSVEIVDTAQPIANLTEPIDFCIDLQIKRDRGYQTELRKNYQDGSYPIDAVSMPVRNVNYSIFSCGNGNEKHEILFLEIWTNGSLTPKEALYEASRNLIDLFLPFLHAEEEGTSFEENKNRFTPPLFTFQKRLTNLKKNKKGIPLNCIFIDQLELTSRTYNCLKRANIHTLLDLLSKTEEDLMRIDSFRMEDRKHIWDTLEKHLPIDLLKNKLSF.

Residues 1-233 form an alpha N-terminal domain (alpha-NTD) region; sequence MVREEVAGST…DLFLPFLHAE (233 aa). Residues 264-339 are alpha C-terminal domain (alpha-CTD); it reads KKGIPLNCIF…IDLLKNKLSF (76 aa).

This sequence belongs to the RNA polymerase alpha chain family. In terms of assembly, in plastids the minimal PEP RNA polymerase catalytic core is composed of four subunits: alpha, beta, beta', and beta''. When a (nuclear-encoded) sigma factor is associated with the core the holoenzyme is formed, which can initiate transcription.

The protein resides in the plastid. It is found in the chloroplast. The catalysed reaction is RNA(n) + a ribonucleoside 5'-triphosphate = RNA(n+1) + diphosphate. In terms of biological role, DNA-dependent RNA polymerase catalyzes the transcription of DNA into RNA using the four ribonucleoside triphosphates as substrates. The sequence is that of DNA-directed RNA polymerase subunit alpha from Psathyrostachys fragilis (Russian wild rye).